Here is a 250-residue protein sequence, read N- to C-terminus: Kv channel-interacting protein 4 (250 aa).

The interval 2–44 (NVRRVESISAQLEEASSTGGFLYAQNSTKRSIKERLMKLLPCS) is KIS. Ser-17 and Ser-56 each carry phosphoserine. Residues 61–117 (LEMATVRHRPEALELLEAQSKFTKKELQILYRGFKNECPSGVVNEETFKEIYSQFFP) form the EF-hand 1; degenerate domain. EF-hand domains are found at residues 120–155 (DSTT…LLRG), 156–191 (TVQE…IYDM), and 204–239 (APRQ…DENI). Ca(2+) is bound by residues Asp-133, Asp-135, Asn-137, Asp-144, Asp-169, Asn-171, Asp-173, Tyr-175, Glu-180, Asp-217, Asn-219, Asp-221, and Glu-228. Positions 237–250 (ENIMRSMQLFENVI) are interaction with KCND2.

It belongs to the recoverin family. Component of heteromultimeric potassium channels. Identified in potassium channel complexes containing KCND1, KCND2, KCND3, KCNIP1, KCNIP2, KCNIP3, KCNIP4, DPP6 and DPP10. Interacts with KCND2. Interacts with KCND3. Interacts with the C-terminus of PSEN2 and probably PSEN1.

The protein resides in the cell membrane. It is found in the cytoplasm. The protein localises to the peroxisome. Functionally, regulatory subunit of Kv4/D (Shal)-type voltage-gated rapidly inactivating A-type potassium channels. Modulates KCND2 channel density, inactivation kinetics and rate of recovery from inactivation in a calcium-dependent and isoform-specific manner. Modulates KCND3/Kv4.3 currents. Isoform 4 does not increase KCND2 expression at the cell membrane. Isoform 4 retains KCND3 in the endoplasmic reticulum and negatively regulates its expression at the cell membrane. This Macaca fascicularis (Crab-eating macaque) protein is Kv channel-interacting protein 4 (KCNIP4).